Here is a 234-residue protein sequence, read N- to C-terminus: Glucosamine-6-phosphate deaminase (234 aa).

The active-site Proton acceptor; for enolization step is Asp62. The active-site For ring-opening step is Asn128. His130 serves as the catalytic Proton acceptor; for ring-opening step. The active-site For ring-opening step is the Glu135.

Belongs to the glucosamine/galactosamine-6-phosphate isomerase family. NagB subfamily.

The catalysed reaction is alpha-D-glucosamine 6-phosphate + H2O = beta-D-fructose 6-phosphate + NH4(+). It participates in amino-sugar metabolism; N-acetylneuraminate degradation; D-fructose 6-phosphate from N-acetylneuraminate: step 5/5. Catalyzes the reversible isomerization-deamination of glucosamine 6-phosphate (GlcN6P) to form fructose 6-phosphate (Fru6P) and ammonium ion. This chain is Glucosamine-6-phosphate deaminase, found in Streptococcus equi subsp. zooepidemicus (strain H70).